We begin with the raw amino-acid sequence, 318 residues long: Lipoyl synthase 1 (318 aa).

The interval 6–32 is disordered; it reads DTISNPLRPRHPEKVNRPDSASPPKPD. 7 residues coordinate [4Fe-4S] cluster: C60, C65, C71, C86, C90, C93, and S299. The Radical SAM core domain occupies 72-288; sequence WDKKHATFMI…EKVAYTKGFL (217 aa).

The protein belongs to the radical SAM superfamily. Lipoyl synthase family. It depends on [4Fe-4S] cluster as a cofactor.

The protein localises to the cytoplasm. It carries out the reaction [[Fe-S] cluster scaffold protein carrying a second [4Fe-4S](2+) cluster] + N(6)-octanoyl-L-lysyl-[protein] + 2 oxidized [2Fe-2S]-[ferredoxin] + 2 S-adenosyl-L-methionine + 4 H(+) = [[Fe-S] cluster scaffold protein] + N(6)-[(R)-dihydrolipoyl]-L-lysyl-[protein] + 4 Fe(3+) + 2 hydrogen sulfide + 2 5'-deoxyadenosine + 2 L-methionine + 2 reduced [2Fe-2S]-[ferredoxin]. It participates in protein modification; protein lipoylation via endogenous pathway; protein N(6)-(lipoyl)lysine from octanoyl-[acyl-carrier-protein]: step 2/2. Its function is as follows. Catalyzes the radical-mediated insertion of two sulfur atoms into the C-6 and C-8 positions of the octanoyl moiety bound to the lipoyl domains of lipoate-dependent enzymes, thereby converting the octanoylated domains into lipoylated derivatives. In Bradyrhizobium diazoefficiens (strain JCM 10833 / BCRC 13528 / IAM 13628 / NBRC 14792 / USDA 110), this protein is Lipoyl synthase 1.